Reading from the N-terminus, the 732-residue chain is Catalase-peroxidase (732 aa).

A disordered region spans residues Met1–Asp26. A cross-link (tryptophyl-tyrosyl-methioninium (Trp-Tyr) (with M-245)) is located at residues Trp96–Tyr219. Catalysis depends on His97, which acts as the Proton acceptor. A cross-link (tryptophyl-tyrosyl-methioninium (Tyr-Met) (with W-96)) is located at residues Tyr219–Met245. Residue His260 participates in heme b binding. Residues Lys344 to Ala365 are disordered.

This sequence belongs to the peroxidase family. Peroxidase/catalase subfamily. As to quaternary structure, homodimer or homotetramer. The cofactor is heme b. In terms of processing, formation of the three residue Trp-Tyr-Met cross-link is important for the catalase, but not the peroxidase activity of the enzyme.

It carries out the reaction H2O2 + AH2 = A + 2 H2O. The enzyme catalyses 2 H2O2 = O2 + 2 H2O. Bifunctional enzyme with both catalase and broad-spectrum peroxidase activity. In Methanospirillum hungatei JF-1 (strain ATCC 27890 / DSM 864 / NBRC 100397 / JF-1), this protein is Catalase-peroxidase.